A 531-amino-acid chain; its full sequence is Na(+)/H(+) antiporter NhaB (531 aa).

Helical transmembrane passes span 23 to 45 (IAIL…VAGW), 66 to 86 (PGGL…SQVL), 97 to 117 (LLLI…LFVF), 130 to 164 (VSLM…FYSI), 206 to 226 (LLMH…VGEP), 244 to 264 (LRMG…CFLV), 307 to 327 (AFVG…VGLI), 352 to 372 (EEAL…GVII), 393 to 413 (LVIF…VFVG), 451 to 471 (ATPN…APLI), and 478 to 498 (MVWM…LAIE).

This sequence belongs to the NhaB Na(+)/H(+) (TC 2.A.34) antiporter family.

Its subcellular location is the cell inner membrane. The enzyme catalyses 2 Na(+)(in) + 3 H(+)(out) = 2 Na(+)(out) + 3 H(+)(in). Na(+)/H(+) antiporter that extrudes sodium in exchange for external protons. This is Na(+)/H(+) antiporter NhaB from Shewanella loihica (strain ATCC BAA-1088 / PV-4).